We begin with the raw amino-acid sequence, 310 residues long: Tryptophan 2,3-dioxygenase (310 aa).

Positions 1 to 39 (MQPPGNDAPAGCPFSGARAQGTQAAHEAPHVPGDAGEQA) are disordered. Substrate is bound by residues 79–83 (FIIQH), tyrosine 141, and arginine 145. Histidine 268 is a heme binding site. Threonine 282 is a substrate binding site.

Belongs to the tryptophan 2,3-dioxygenase family. As to quaternary structure, homotetramer. Heme is required as a cofactor.

The catalysed reaction is L-tryptophan + O2 = N-formyl-L-kynurenine. Its pathway is amino-acid degradation; L-tryptophan degradation via kynurenine pathway; L-kynurenine from L-tryptophan: step 1/2. In terms of biological role, heme-dependent dioxygenase that catalyzes the oxidative cleavage of the L-tryptophan (L-Trp) pyrrole ring and converts L-tryptophan to N-formyl-L-kynurenine. Catalyzes the oxidative cleavage of the indole moiety. The polypeptide is Tryptophan 2,3-dioxygenase (Burkholderia multivorans (strain ATCC 17616 / 249)).